Reading from the N-terminus, the 58-residue chain is Large ribosomal subunit protein eL20 (58 aa).

A disordered region spans residues 37 to 58 (TTVGSQHNRKRPQIEIKEVSAA). The span at 48 to 58 (PQIEIKEVSAA) shows a compositional bias: basic and acidic residues.

It belongs to the eukaryotic ribosomal protein eL20 family. As to quaternary structure, part of the 50S ribosomal subunit. Binds 23S rRNA.

This chain is Large ribosomal subunit protein eL20, found in Halorubrum lacusprofundi (strain ATCC 49239 / DSM 5036 / JCM 8891 / ACAM 34).